The primary structure comprises 77 residues: Acyl carrier protein (77 aa).

The Carrier domain occupies 2-77 (STIEERVKKV…EAIDYVVAHQ (76 aa)). Ser-37 is modified (O-(pantetheine 4'-phosphoryl)serine).

It belongs to the acyl carrier protein (ACP) family. Post-translationally, 4'-phosphopantetheine is transferred from CoA to a specific serine of apo-ACP by AcpS. This modification is essential for activity because fatty acids are bound in thioester linkage to the sulfhydryl of the prosthetic group.

It localises to the cytoplasm. The protein operates within lipid metabolism; fatty acid biosynthesis. Its function is as follows. Carrier of the growing fatty acid chain in fatty acid biosynthesis. This Chromohalobacter salexigens (strain ATCC BAA-138 / DSM 3043 / CIP 106854 / NCIMB 13768 / 1H11) protein is Acyl carrier protein.